The sequence spans 137 residues: Large ribosomal subunit protein uL16 (137 aa).

Belongs to the universal ribosomal protein uL16 family. As to quaternary structure, part of the 50S ribosomal subunit.

Functionally, binds 23S rRNA and is also seen to make contacts with the A and possibly P site tRNAs. The polypeptide is Large ribosomal subunit protein uL16 (Rhizobium johnstonii (strain DSM 114642 / LMG 32736 / 3841) (Rhizobium leguminosarum bv. viciae)).